The sequence spans 1052 residues: RTX-III toxin determinant A from serotype 8 (1052 aa).

3 helical membrane passes run 248-265, 275-334, and 372-418; these read GLDI…SFAL, KVAA…LRVA, and DASI…GILE. Hemolysin-type calcium-binding repeat units lie at residues 744–761, 762–779, 780–797, 798–815, 826–843, and 844–861; these read KGSK…DDLL, NGND…NDEL, RGDN…NDKL, LGGN…NDEL, RGGK…SDLL, and DGGE…SDFY.

This sequence belongs to the RTX prokaryotic toxin (TC 1.C.11) family. Post-translationally, palmitoylated by ApxIIIC. The toxin only becomes active when modified.

It localises to the secreted. The protein localises to the host cell membrane. Does not have hemolytic activity but shows a strong cytotoxicity towards alveolar macrophages and neutrophils. In Actinobacillus pleuropneumoniae (Haemophilus pleuropneumoniae), this protein is RTX-III toxin determinant A from serotype 8 (apxIIIA).